The primary structure comprises 258 residues: Hemin import ATP-binding protein HmuV (258 aa).

Positions 1–238 constitute an ABC transporter domain; sequence MLDIDVSNLS…DILERTYRTP (238 aa). 34–41 contributes to the ATP binding site; sequence GENGAGKS.

It belongs to the ABC transporter superfamily. Heme (hemin) importer (TC 3.A.1.14.5) family. As to quaternary structure, the complex is composed of two ATP-binding proteins (HmuV), two transmembrane proteins (HmuU) and a solute-binding protein (HmuT).

It localises to the cell inner membrane. Part of the ABC transporter complex HmuTUV involved in hemin import. Responsible for energy coupling to the transport system. This is Hemin import ATP-binding protein HmuV from Idiomarina loihiensis (strain ATCC BAA-735 / DSM 15497 / L2-TR).